The primary structure comprises 845 residues: Beta-glucosidase B (845 aa).

Residue Asn-202 is glycosylated (N-linked (GlcNAc...) asparagine). Residue Asp-230 is part of the active site. Asn-235 is a glycosylation site (N-linked (GlcNAc...) asparagine). In terms of domain architecture, PA14 spans 406 to 557 (EGQPGWTLDF…HNRDLLSEAV (152 aa)). N-linked (GlcNAc...) asparagine glycosylation is found at Asn-591, Asn-612, and Asn-794.

This sequence belongs to the glycosyl hydrolase 3 family.

It carries out the reaction Hydrolysis of terminal, non-reducing beta-D-glucosyl residues with release of beta-D-glucose.. Its pathway is glycan metabolism; cellulose degradation. Its function is as follows. Beta-glucosidases are one of a number of cellulolytic enzymes involved in the degradation of cellulosic biomass. Catalyzes the last step releasing glucose from the inhibitory cellobiose. This Emericella nidulans (strain FGSC A4 / ATCC 38163 / CBS 112.46 / NRRL 194 / M139) (Aspergillus nidulans) protein is Beta-glucosidase B (bglB).